A 69-amino-acid chain; its full sequence is Putative membrane protein insertion efficiency factor (69 aa).

It belongs to the UPF0161 family.

The protein resides in the cell membrane. In terms of biological role, could be involved in insertion of integral membrane proteins into the membrane. The sequence is that of Putative membrane protein insertion efficiency factor from Caldanaerobacter subterraneus subsp. tengcongensis (strain DSM 15242 / JCM 11007 / NBRC 100824 / MB4) (Thermoanaerobacter tengcongensis).